Here is a 378-residue protein sequence, read N- to C-terminus: tRNA-specific 2-thiouridylase MnmA (378 aa).

ATP-binding positions include 9-16 (GVSGGVDS) and M35. The interval 94–96 (NPD) is interaction with target base in tRNA. Residue C99 is the Nucleophile of the active site. The cysteines at positions 99 and 195 are disulfide-linked. G123 contributes to the ATP binding site. Residues 145-147 (KDQ) are interaction with tRNA. The Cysteine persulfide intermediate role is filled by C195. Residues 307–308 (RY) are interaction with tRNA.

It belongs to the MnmA/TRMU family.

The protein resides in the cytoplasm. The enzyme catalyses S-sulfanyl-L-cysteinyl-[protein] + uridine(34) in tRNA + AH2 + ATP = 2-thiouridine(34) in tRNA + L-cysteinyl-[protein] + A + AMP + diphosphate + H(+). Its function is as follows. Catalyzes the 2-thiolation of uridine at the wobble position (U34) of tRNA, leading to the formation of s(2)U34. The sequence is that of tRNA-specific 2-thiouridylase MnmA from Xanthomonas campestris pv. campestris (strain 8004).